The chain runs to 189 residues: HGPRTase-like protein (189 aa).

This sequence belongs to the purine/pyrimidine phosphoribosyltransferase family. Archaeal HPRT subfamily.

In terms of biological role, may catalyze a purine salvage reaction, the substrate is unknown. This Halorhabdus utahensis (strain DSM 12940 / JCM 11049 / AX-2) protein is HGPRTase-like protein.